The chain runs to 1083 residues: Kinesin-like protein klp-19 (1083 aa).

One can recognise a Kinesin motor domain in the interval Ser6 to Ile328. Gly85 to Thr92 is an ATP binding site. The stretch at Met408–Thr435 forms a coiled coil. Acidic residues predominate over residues Thr458–Glu471. The tract at residues Thr458–Asp479 is disordered. The stretch at Leu487–Asp650 forms a coiled coil. A compositionally biased stretch (polar residues) spans Asp1044–Phe1055. The tract at residues Asp1044–Leu1083 is disordered.

It belongs to the TRAFAC class myosin-kinesin ATPase superfamily. Kinesin family. Expressed in the gonad.

The protein localises to the nucleus. It localises to the nucleoplasm. The protein resides in the cytoplasm. It is found in the cytoskeleton. Its subcellular location is the spindle. The protein localises to the chromosome. In terms of biological role, required for chromosome movement and orientation on spindle poles in mitosis and meiosis. May play a role in early anterior-posterior chromosome movement in mitotic embryos. The sequence is that of Kinesin-like protein klp-19 from Caenorhabditis elegans.